A 387-amino-acid chain; its full sequence is Decapping nuclease RAI1 (387 aa).

Glu-172 contacts a divalent metal cation. Ser-198 carries the post-translational modification Phosphoserine. Residue Glu-221 coordinates substrate. A divalent metal cation is bound by residues Asp-223, Glu-241, and Leu-242. Positions 243 and 267 each coordinate substrate. The interaction with RAT1 stretch occupies residues 273–387 (IPRIIYGFKD…GFKEWRKSLK (115 aa)).

The protein belongs to the DXO/Dom3Z family. In terms of assembly, interacts with RAT1, RTT103 and pre-60S ribosomal subunits. Interacts with RAT1; the interaction is direct, stabilizes RAT1 protein structure and stimulates its exoribonuclease activity. The interaction also stimulates RAI1 pyrophosphohydrolase activity, probably by recruiting it to mRNA substrates. Requires a divalent metal cation as cofactor.

The protein localises to the nucleus. It carries out the reaction a 5'-end NAD(+)-phospho-ribonucleoside in mRNA + H2O = a 5'-end phospho-ribonucleoside in mRNA + NAD(+) + H(+). The enzyme catalyses a 5'-end (N(7)-methyl 5'-triphosphoguanosine)-ribonucleoside-ribonucleotide in mRNA + H2O = a (N(7)-methyl 5'-triphosphoguanosine)-nucleoside + a 5'-end phospho-ribonucleoside in mRNA + H(+). It catalyses the reaction a 5'-end triphospho-ribonucleoside in mRNA + H2O = a 5'-end phospho-ribonucleoside in mRNA + diphosphate + H(+). In terms of biological role, decapping enzyme for NAD-capped RNAs: specifically hydrolyzes the nicotinamide adenine dinucleotide (NAD) cap from a subset of RNAs by removing the entire NAD moiety from the 5'-end of an NAD-capped RNA. The NAD-cap is present at the 5'-end of some RNAs and snoRNAs. In contrast to the canonical 5'-end N7 methylguanosine (m7G) cap, the NAD cap promotes mRNA decay. Also acts as a non-canonical decapping enzyme that removes the entire cap structure of m7G capped or incompletely capped RNAs. Has decapping activity toward incomplete 5'-end m7G cap mRNAs such as unmethylated 5'-end-capped RNA (cap0), while it has no activity toward 2'-O-ribose methylated m7G cap (cap1). Also possesses RNA 5'-pyrophosphohydrolase activity by hydrolyzing the 5'-end triphosphate to release pyrophosphates. Stimulates exoribonuclease activity of RAT1, allowing it to degrade RNAs with stable secondary structure more effectively. Required for the processing of nuclear mRNA and rRNA precursors. May promote termination of transcription by RNA polymerase II. This Saccharomyces cerevisiae (strain ATCC 204508 / S288c) (Baker's yeast) protein is Decapping nuclease RAI1.